A 511-amino-acid chain; its full sequence is V-type proton ATPase subunit B, brain isoform (511 aa).

ATP is bound at residue arginine 400.

Belongs to the ATPase alpha/beta chains family. In terms of assembly, V-ATPase is a heteromultimeric enzyme made up of two complexes: the ATP-hydrolytic V1 complex and the proton translocation V0 complex. The V1 complex consists of three catalytic AB heterodimers that form a heterohexamer, three peripheral stalks each consisting of EG heterodimers, one central rotor including subunits D and F, and the regulatory subunits C and H. The proton translocation complex V0 consists of the proton transport subunit a, a ring of proteolipid subunits c9c'', rotary subunit d, subunits e and f, and the accessory subunits ATP6AP1/Ac45 and ATP6AP2/PRR. In terms of tissue distribution, kidney; localizes to early distal nephron, encompassing thick ascending limbs and distal convoluted tubules (at protein level).

It localises to the apical cell membrane. It is found in the melanosome. The protein resides in the cytoplasm. The protein localises to the cytoplasmic vesicle. Its subcellular location is the secretory vesicle. It localises to the synaptic vesicle membrane. It is found in the clathrin-coated vesicle membrane. Functionally, non-catalytic subunit of the V1 complex of vacuolar(H+)-ATPase (V-ATPase), a multisubunit enzyme composed of a peripheral complex (V1) that hydrolyzes ATP and a membrane integral complex (V0) that translocates protons. V-ATPase is responsible for acidifying and maintaining the pH of intracellular compartments and in some cell types, is targeted to the plasma membrane, where it is responsible for acidifying the extracellular environment. In renal intercalated cells, can partially compensate the lack of ATP6V1B1 and mediate secretion of protons (H+) into the urine under base-line conditions but not in conditions of acid load. The sequence is that of V-type proton ATPase subunit B, brain isoform (ATP6V1B2) from Homo sapiens (Human).